The following is an 89-amino-acid chain: Small ribosomal subunit protein uS15 (89 aa).

This sequence belongs to the universal ribosomal protein uS15 family. As to quaternary structure, part of the 30S ribosomal subunit. Forms a bridge to the 50S subunit in the 70S ribosome, contacting the 23S rRNA.

Functionally, one of the primary rRNA binding proteins, it binds directly to 16S rRNA where it helps nucleate assembly of the platform of the 30S subunit by binding and bridging several RNA helices of the 16S rRNA. Forms an intersubunit bridge (bridge B4) with the 23S rRNA of the 50S subunit in the ribosome. The protein is Small ribosomal subunit protein uS15 of Chloroherpeton thalassium (strain ATCC 35110 / GB-78).